Reading from the N-terminus, the 290-residue chain is Oxaloacetate decarboxylase (290 aa).

Ser53 is a binding site for substrate. Asp91 contributes to the Mg(2+) binding site. Substrate-binding residues include Arg162 and His238.

It belongs to the isocitrate lyase/PEP mutase superfamily. Oxaloacetate decarboxylase family. As to quaternary structure, homotetramer; dimer of dimers. Mg(2+) is required as a cofactor.

It carries out the reaction oxaloacetate + H(+) = pyruvate + CO2. Catalyzes the decarboxylation of oxaloacetate into pyruvate. Seems to play a role in maintaining cellular concentrations of bicarbonate and pyruvate. The sequence is that of Oxaloacetate decarboxylase from Ectopseudomonas mendocina (strain ymp) (Pseudomonas mendocina).